Consider the following 216-residue polypeptide: MRMILLGPPGAGKGTQAKLISEKYSIPHISTGDIFRKNISEKTPLGVKAKEYMDKGQLVPDELTIDLVNDRLTHEDCKKGFLLDGFPRTVKQAEALEKFLTENNQSLDTALLIDVPSSFILERMTGRRVCPSCGASYHIKFNPPKIEGLCDVCKKEVIQRKDDTEETVKERIEVYDRQTQPLVDFYSSKDQLFVVDGTQSIDQVFETISNHIEGDK.

10-15 (GAGKGT) lines the ATP pocket. Residues 30–59 (STGDIFRKNISEKTPLGVKAKEYMDKGQLV) are NMP. AMP is bound by residues Thr31, Arg36, 57-59 (QLV), 85-88 (GFPR), and Gln92. The interval 126-163 (GRRVCPSCGASYHIKFNPPKIEGLCDVCKKEVIQRKDD) is LID. An ATP-binding site is contributed by Arg127. Cys130 and Cys133 together coordinate Zn(2+). 136-137 (SY) is an ATP binding site. Zn(2+) contacts are provided by Cys150 and Cys153. AMP-binding residues include Arg160 and Arg171. Gln199 contacts ATP.

It belongs to the adenylate kinase family. As to quaternary structure, monomer.

It is found in the cytoplasm. It catalyses the reaction AMP + ATP = 2 ADP. It participates in purine metabolism; AMP biosynthesis via salvage pathway; AMP from ADP: step 1/1. In terms of biological role, catalyzes the reversible transfer of the terminal phosphate group between ATP and AMP. Plays an important role in cellular energy homeostasis and in adenine nucleotide metabolism. The chain is Adenylate kinase from Clostridium novyi (strain NT).